Reading from the N-terminus, the 144-residue chain is Putative pre-16S rRNA nuclease (144 aa).

This sequence belongs to the YqgF nuclease family.

Its subcellular location is the cytoplasm. In terms of biological role, could be a nuclease involved in processing of the 5'-end of pre-16S rRNA. This Oenococcus oeni (strain ATCC BAA-331 / PSU-1) protein is Putative pre-16S rRNA nuclease.